Reading from the N-terminus, the 295-residue chain is Lectin 11 (295 aa).

The Cytoplasmic portion of the chain corresponds to 1-22; that stretch reads MHYSHFYFIINNTNMTINAIPK. A helical membrane pass occupies residues 23–45; sequence LFATKNSISLSIVIFMYLLILVA. The Extracellular segment spans residues 46-295; the sequence is NVKSDSSFNF…ILSWSFTSNM (250 aa). N152 carries N-linked (GlcNAc...) asparagine glycosylation.

It belongs to the leguminous lectin family.

It is found in the membrane. Its function is as follows. May be involved in arbuscular mycorrhizal (AM) symbiosis with AM fungi. This chain is Lectin 11, found in Medicago truncatula (Barrel medic).